Reading from the N-terminus, the 384-residue chain is Glucose-1-phosphate adenylyltransferase (384 aa).

Alpha-D-glucose 1-phosphate is bound by residues Tyr103, Gly168, 183-184 (EK), and Ser194.

Belongs to the bacterial/plant glucose-1-phosphate adenylyltransferase family. As to quaternary structure, homotetramer.

It catalyses the reaction alpha-D-glucose 1-phosphate + ATP + H(+) = ADP-alpha-D-glucose + diphosphate. The protein operates within glycan biosynthesis; glycogen biosynthesis. Involved in the biosynthesis of ADP-glucose, a building block required for the elongation reactions to produce glycogen. Catalyzes the reaction between ATP and alpha-D-glucose 1-phosphate (G1P) to produce pyrophosphate and ADP-Glc. The protein is Glucose-1-phosphate adenylyltransferase of Fusobacterium nucleatum subsp. nucleatum (strain ATCC 25586 / DSM 15643 / BCRC 10681 / CIP 101130 / JCM 8532 / KCTC 2640 / LMG 13131 / VPI 4355).